Here is a 124-residue protein sequence, read N- to C-terminus: Large ribosomal subunit protein bL12 (124 aa).

The protein belongs to the bacterial ribosomal protein bL12 family. Homodimer. Part of the ribosomal stalk of the 50S ribosomal subunit. Forms a multimeric L10(L12)X complex, where L10 forms an elongated spine to which 2 to 4 L12 dimers bind in a sequential fashion. Binds GTP-bound translation factors.

Forms part of the ribosomal stalk which helps the ribosome interact with GTP-bound translation factors. Is thus essential for accurate translation. This is Large ribosomal subunit protein bL12 from Burkholderia lata (strain ATCC 17760 / DSM 23089 / LMG 22485 / NCIMB 9086 / R18194 / 383).